We begin with the raw amino-acid sequence, 120 residues long: Late cornified envelope-like proline-rich protein 1 (120 aa).

This sequence belongs to the cornifin (SPRR) family.

In Mus musculus (Mouse), this protein is Late cornified envelope-like proline-rich protein 1 (Lelp1).